A 476-amino-acid polypeptide reads, in one-letter code: NAD(+) hydrolase ThsA (476 aa).

One can recognise a Deacetylase sirtuin-type domain in the interval 4 to 283; sequence NPIVELFIKD…QRIENNIKTK (280 aa). Residues alanine 23, aspartate 114, and histidine 152 each contribute to the NAD(+) site. The active-site Proton acceptor is the histidine 152. Positions 284-476 are SLOG (STALD) domain, binds 3'cADPR; that stretch reads TVFLSGSAVE…IIEFVEILSN (193 aa). Glycine 289, serine 290, leucine 326, phenylalanine 357, arginine 371, lysine 388, glycine 399, and glutamate 403 together coordinate 3'cADPR.

It belongs to the soluble Thoeris ThsA family. As to quaternary structure, homotetramer formed by dimer of dimers; homooctamers are occasionally seen. Not seen to interact with ThsB. In the absence of the signal generated by ThsB, 63% monomer and 20% homotetramer; in the presence of the ThsB signal product 40% of the protein is dimeric. Homotetramer in solution; probably dimerizes via the N-terminal sirtuin-like domain.

It is found in the cytoplasm. The catalysed reaction is NAD(+) + H2O = ADP-D-ribose + nicotinamide + H(+). Its activity is regulated as follows. Activated by a molecule generated by endogenous ThsB (AC J8G8J6) or ThsB' (AC J8CSK2); activation in vitro is 50-100x more sensitive to 3' cyclic ADP-D-ribose (3'cADPR) than 2'cADPR. 3'cADPR activates the NADase function of ThsA by binding to the SLOG domain, which changes its tetramer organization, allowing NAD to access the active site. Also activated by a signal molecule generated by B.dafuensis TIR1 (AC A0A5B8Z670) and TIR2 (AC A0A5B8Z260), and by BdTIR (AC I1GTC2), a plant protein involved in defense against bacterial infection. The signal produced by BdTIR is probably 2'cADPR, which activates this protein, the signal produced by endogenous ThsB' is probably 3'cADPR. Functionally, NAD(+) hydrolyzing component (NADase) of the Thoeris antiviral defense system, composed of ThsA and ThsB. Activated by a signal molecule generated by endogenous ThsB (AC J8G8J6) or ThsB' (AC J8CSK2, probably 3'cADPR), by TIR1 and TIR2 from B.dafuensis or by BdTIR from B.distachyon (AC I1GTC2, probably 2'cADPR). Upon activation binds and hydrolyzes NAD(+), leading to cell death and inhibition of phage replication. Not seen to bind DNA. Activation is 50-100x more sensitive to 3' cyclic ADP-D-ribose (3'cADPR) than 2'cADPR. In another paper ThsA is not activated by any tested cADPR isomer, although it binds 3'cADPR; it was suggested the protein is already in a fully active state. Expression of ThsA and ThsB in B.subtilis (strain BEST7003) confers resistance to phages phi29, SBSphiC, SBSphiJ and SPO1. At multiplicity of infection (MOI) of 0.05 Thoeris-encoding cultures grow normally when infected with SPO1, at MOI 5 cultures collapse prematurely by 90 minutes post-infection, thus the phage are not able to complete a replication cycle. NAD(+) levels fall and ADP-D-ribose levels rise 60 minutes post-infection. Thoeris cultures eventually recover, but retain the same susceptibility to SPO1. This is NAD(+) hydrolase ThsA from Bacillus cereus (strain MSX-D12).